The sequence spans 132 residues: Large ribosomal subunit protein bL19 (132 aa).

It belongs to the bacterial ribosomal protein bL19 family.

In terms of biological role, this protein is located at the 30S-50S ribosomal subunit interface and may play a role in the structure and function of the aminoacyl-tRNA binding site. The polypeptide is Large ribosomal subunit protein bL19 (Persephonella marina (strain DSM 14350 / EX-H1)).